Consider the following 600-residue polypeptide: Elongation factor 4 (600 aa).

One can recognise a tr-type G domain in the interval 4 to 186 (SKIRNFSIIA…AIVDKIPPPS (183 aa)). GTP-binding positions include 16 to 21 (DHGKST) and 133 to 136 (NKID).

Belongs to the TRAFAC class translation factor GTPase superfamily. Classic translation factor GTPase family. LepA subfamily.

It localises to the cell membrane. It catalyses the reaction GTP + H2O = GDP + phosphate + H(+). Its function is as follows. Required for accurate and efficient protein synthesis under certain stress conditions. May act as a fidelity factor of the translation reaction, by catalyzing a one-codon backward translocation of tRNAs on improperly translocated ribosomes. Back-translocation proceeds from a post-translocation (POST) complex to a pre-translocation (PRE) complex, thus giving elongation factor G a second chance to translocate the tRNAs correctly. Binds to ribosomes in a GTP-dependent manner. The protein is Elongation factor 4 of Mycoplasma capricolum subsp. capricolum (strain California kid / ATCC 27343 / NCTC 10154).